Here is a 149-residue protein sequence, read N- to C-terminus: Large ribosomal subunit protein uL15 (149 aa).

2 stretches are compositionally biased toward basic residues: residues 1–14 and 21–30; these read MPTHLSKTRKHRGH and RVGKHRKHPG. The tract at residues 1 to 42 is disordered; it reads MPTHLSKTRKHRGHVSAGHGRVGKHRKHPGGRGLAGGQHHHR.

This sequence belongs to the universal ribosomal protein uL15 family.

This is Large ribosomal subunit protein uL15 from Blumeria hordei (Barley powdery mildew).